We begin with the raw amino-acid sequence, 71 residues long: Arrestin-D (71 aa).

The protein belongs to the arrestin family. As to expression, adrenal, cerebral cortex, heart, liver, lung, pituitary and testis.

This chain is Arrestin-D (Dar), found in Rattus norvegicus (Rat).